The primary structure comprises 470 residues: Phosphoribosylamine--glycine ligase (470 aa).

Residues 115–354 (KDFLKRIGVP…MAEISMAVVE (240 aa)) form the ATP-grasp domain. 142–203 (REKFNNGIVV…EERLRGIEVA (62 aa)) provides a ligand contact to ATP. Mg(2+) contacts are provided by Glu324 and Asn326.

Belongs to the GARS family. It depends on Mg(2+) as a cofactor. The cofactor is Mn(2+).

It catalyses the reaction 5-phospho-beta-D-ribosylamine + glycine + ATP = N(1)-(5-phospho-beta-D-ribosyl)glycinamide + ADP + phosphate + H(+). It functions in the pathway purine metabolism; IMP biosynthesis via de novo pathway; N(1)-(5-phospho-D-ribosyl)glycinamide from 5-phospho-alpha-D-ribose 1-diphosphate: step 2/2. The protein is Phosphoribosylamine--glycine ligase (purD) of Archaeoglobus fulgidus (strain ATCC 49558 / DSM 4304 / JCM 9628 / NBRC 100126 / VC-16).